We begin with the raw amino-acid sequence, 302 residues long: tRNA-cytidine(32) 2-sulfurtransferase (302 aa).

A PP-loop motif motif is present at residues 45–50; sequence SGGKDS. [4Fe-4S] cluster is bound by residues C120, C123, and C211.

It belongs to the TtcA family. As to quaternary structure, homodimer. Requires Mg(2+) as cofactor. [4Fe-4S] cluster is required as a cofactor.

Its subcellular location is the cytoplasm. The catalysed reaction is cytidine(32) in tRNA + S-sulfanyl-L-cysteinyl-[cysteine desulfurase] + AH2 + ATP = 2-thiocytidine(32) in tRNA + L-cysteinyl-[cysteine desulfurase] + A + AMP + diphosphate + H(+). The protein operates within tRNA modification. Catalyzes the ATP-dependent 2-thiolation of cytidine in position 32 of tRNA, to form 2-thiocytidine (s(2)C32). The sulfur atoms are provided by the cysteine/cysteine desulfurase (IscS) system. This Aeromonas salmonicida (strain A449) protein is tRNA-cytidine(32) 2-sulfurtransferase.